The primary structure comprises 720 residues: Polyribonucleotide nucleotidyltransferase (720 aa).

Mg(2+) is bound by residues D487 and D493. In terms of domain architecture, KH spans 554-613 (PRIETFKIPTDKIREVIGTGGKVIREIVEKTGAKINIEDDGTVKVASNDGEAMKAAIKWI). The S1 motif domain occupies 623–691 (GQIYEGTVVK…DRGKTRLSMK (69 aa)). Residues 691 to 720 (KAVDQQTGEDLEAAGHKAEKADAPREAAGE) form a disordered region. A compositionally biased stretch (basic and acidic residues) spans 703-720 (AAGHKAEKADAPREAAGE).

The protein belongs to the polyribonucleotide nucleotidyltransferase family. Requires Mg(2+) as cofactor.

The protein localises to the cytoplasm. It carries out the reaction RNA(n+1) + phosphate = RNA(n) + a ribonucleoside 5'-diphosphate. Its function is as follows. Involved in mRNA degradation. Catalyzes the phosphorolysis of single-stranded polyribonucleotides processively in the 3'- to 5'-direction. The chain is Polyribonucleotide nucleotidyltransferase from Nitrobacter hamburgensis (strain DSM 10229 / NCIMB 13809 / X14).